Here is a 308-residue protein sequence, read N- to C-terminus: UPF0026 protein jhp_0109 (308 aa).

The Radical SAM core domain occupies 18–247; that stretch reads FGKSLGVDLS…VSLPKRSTAQ (230 aa). [4Fe-4S] cluster is bound by residues Cys-33, Cys-37, and Cys-40.

The protein belongs to the UPF0026 family. [4Fe-4S] cluster serves as cofactor.

The sequence is that of UPF0026 protein jhp_0109 from Helicobacter pylori (strain J99 / ATCC 700824) (Campylobacter pylori J99).